Consider the following 409-residue polypeptide: Probable type I inositol 1,4,5-trisphosphate 5-phosphatase (409 aa).

The protein belongs to the inositol 1,4,5-trisphosphate 5-phosphatase type I family.

It catalyses the reaction 1D-myo-inositol 1,4,5-trisphosphate + H2O = 1D-myo-inositol 1,4-bisphosphate + phosphate. The catalysed reaction is 1D-myo-inositol 1,3,4,5-tetrakisphosphate + H2O = 1D-myo-inositol 1,3,4-trisphosphate + phosphate. The chain is Probable type I inositol 1,4,5-trisphosphate 5-phosphatase (ipp-5) from Caenorhabditis elegans.